The sequence spans 148 residues: Single-stranded DNA-binding protein 2 (148 aa).

Positions 6 to 108 (MNHITVSGLV…IEAESFGHDL (103 aa)) constitute an SSB domain.

As to quaternary structure, homotetramer.

This chain is Single-stranded DNA-binding protein 2 (ssb2), found in Tropheryma whipplei (strain TW08/27) (Whipple's bacillus).